The sequence spans 177 residues: MSIVKSKIRTIPDYPKPGILFRDITSLLLDPEGLALTIGTFVNRYQGKGITKVAGIEARGFLTGAPLAFQLGVGFIPIRKKGKLPSETVSEEYDLEYGKDVIEVHKDSIQPGDKILLMDDLIATGGTMIAAVKLLKKLGAEIYEAGVIIDLPDLGGRKKLQEELKVPVFSICEFEGH.

Belongs to the purine/pyrimidine phosphoribosyltransferase family. As to quaternary structure, homodimer.

It localises to the cytoplasm. The enzyme catalyses AMP + diphosphate = 5-phospho-alpha-D-ribose 1-diphosphate + adenine. The protein operates within purine metabolism; AMP biosynthesis via salvage pathway; AMP from adenine: step 1/1. Catalyzes a salvage reaction resulting in the formation of AMP, that is energically less costly than de novo synthesis. This chain is Adenine phosphoribosyltransferase, found in Leptospira interrogans serogroup Icterohaemorrhagiae serovar copenhageni (strain Fiocruz L1-130).